Here is a 169-residue protein sequence, read N- to C-terminus: Putative antitoxin Rv0268c (169 aa).

The segment covering 1-11 (MGTRSKSRTRQ) has biased composition (basic residues). The disordered stretch occupies residues 1–35 (MGTRSKSRTRQLKQSNGCTATTSGASDRRRRARRR). Positions 120–153 (AAILISAERYESLMEELEDLRDRLSVHEREHVTM) form a coiled coil.

Belongs to the phD/YefM antitoxin family.

Its function is as follows. Putative antitoxin component of a type II toxin-antitoxin (TA) system; however the expected toxin coding sequence is not found adjacent to this gene. This is Putative antitoxin Rv0268c from Mycobacterium tuberculosis (strain ATCC 25618 / H37Rv).